The following is a 218-amino-acid chain: Glutathione S-transferase Mu 2 (218 aa).

One can recognise a GST N-terminal domain in the interval 2–88; it reads PMTLGYWNIR…YIARKHNLCG (87 aa). Residue 7–8 participates in glutathione binding; that stretch reads YW. Serine 27 and serine 44 each carry phosphoserine. Glutathione is bound by residues 43–46, lysine 50, 59–60, and 72–73; these read RSQW, NL, and QS. The GST C-terminal domain occupies 90-208; it reads TEKEKIREDI…KSSRFLPRPV (119 aa). Tyrosine 116 contacts substrate.

The protein belongs to the GST superfamily. Mu family. In terms of assembly, homodimer.

It localises to the cytoplasm. It catalyses the reaction RX + glutathione = an S-substituted glutathione + a halide anion + H(+). The enzyme catalyses 11(S)-hydroxy-14(S),15(S)-epoxy-(5Z,8Z,12E)-eicosatrienoate + glutathione = (11S,15S)-dihydroxy-14(R)-S-glutathionyl-(5Z,8Z,12E)-eicosatrienoate. Functionally, conjugation of reduced glutathione to a wide number of exogenous and endogenous hydrophobic electrophiles. Participates in the formation of novel hepoxilin regioisomers. Has activity toward aflatoxin B(1)-8,9-epoxide (AFBO). This Macaca fascicularis (Crab-eating macaque) protein is Glutathione S-transferase Mu 2 (GSTM2).